Consider the following 682-residue polypeptide: Potassium-transporting ATPase ATP-binding subunit (682 aa).

Helical transmembrane passes span 34 to 54, 58 to 78, 219 to 239, and 254 to 274; these read PVMF…LAMV, IAGS…TVLF, IALT…TATL, and VLVA…LSAI. The active-site 4-aspartylphosphate intermediate is the Asp307. ATP is bound by residues Asp344, Glu348, 377–384, and Lys395; that span reads FTAQSRMS. Residues Asp518 and Asp522 each contribute to the Mg(2+) site. A run of 3 helical transmembrane segments spans residues 588–608, 616–636, and 662–682; these read FAII…LNVM, AILS…PLAL, and LVVP…LGLA.

Belongs to the cation transport ATPase (P-type) (TC 3.A.3) family. Type IA subfamily. The system is composed of three essential subunits: KdpA, KdpB and KdpC.

The protein resides in the cell inner membrane. It catalyses the reaction K(+)(out) + ATP + H2O = K(+)(in) + ADP + phosphate + H(+). Its function is as follows. Part of the high-affinity ATP-driven potassium transport (or Kdp) system, which catalyzes the hydrolysis of ATP coupled with the electrogenic transport of potassium into the cytoplasm. This subunit is responsible for energy coupling to the transport system and for the release of the potassium ions to the cytoplasm. The polypeptide is Potassium-transporting ATPase ATP-binding subunit (Salmonella choleraesuis (strain SC-B67)).